A 369-amino-acid polypeptide reads, in one-letter code: Tyrosinase-like protein orsC (369 aa).

A signal peptide spans 1–23 (MLAFNPLVTALAALIFLFCQANA). His112 and His121 together coordinate Cu cation. N-linked (GlcNAc...) asparagine glycans are attached at residues Asn165, Asn179, Asn253, and Asn272. Position 315 (His315) interacts with Cu cation.

It functions in the pathway secondary metabolite biosynthesis. Its function is as follows. Tyrosinase-like protein; part of the gene cluster that mediates the biosynthesis of orsellinic acid, as well as of the cathepsin K inhibitors F9775 A and F9775 B. The non-reducing polyketide synthase orsA produces orsellinic acid by condensing acetyl-CoA with 3 malonyl-CoA units. Further modifications by the decarboxylase orsB and the tyrosinase-like protein orsC lead to the production of F9775 A and F9775 B. The functions of orsD and orsE remain unclear since only orsB and orsC are required to convert orsellinic acid into F9775 A and F9775 B. In Emericella nidulans (strain FGSC A4 / ATCC 38163 / CBS 112.46 / NRRL 194 / M139) (Aspergillus nidulans), this protein is Tyrosinase-like protein orsC.